The chain runs to 453 residues: F-box protein SKIP14 (453 aa).

The F-box; degenerate domain maps to 34–104 (RKNTGGDASS…NRQQLFAGLS (71 aa)).

In terms of assembly, part of a SCF (ASK-cullin-F-box) protein ligase complex. Interacts with CUL1, SKP1A/ASK1 and SPK1B/ASK2.

Its pathway is protein modification; protein ubiquitination. Functionally, component of SCF(ASK-cullin-F-box) E3 ubiquitin ligase complexes, which may mediate the ubiquitination and subsequent proteasomal degradation of target proteins. This is F-box protein SKIP14 (SKIP14) from Arabidopsis thaliana (Mouse-ear cress).